The chain runs to 197 residues: NADH-quinone oxidoreductase subunit B (197 aa).

Residues cysteine 76, cysteine 77, cysteine 141, and cysteine 171 each coordinate [4Fe-4S] cluster.

It belongs to the complex I 20 kDa subunit family. In terms of assembly, NDH-1 is composed of 14 different subunits. Subunits NuoB, C, D, E, F, and G constitute the peripheral sector of the complex. [4Fe-4S] cluster serves as cofactor.

Its subcellular location is the cell inner membrane. It catalyses the reaction a quinone + NADH + 5 H(+)(in) = a quinol + NAD(+) + 4 H(+)(out). Its function is as follows. NDH-1 shuttles electrons from NADH, via FMN and iron-sulfur (Fe-S) centers, to quinones in the respiratory chain. The immediate electron acceptor for the enzyme in this species is believed to be ubiquinone. Couples the redox reaction to proton translocation (for every two electrons transferred, four hydrogen ions are translocated across the cytoplasmic membrane), and thus conserves the redox energy in a proton gradient. In Methylobacterium nodulans (strain LMG 21967 / CNCM I-2342 / ORS 2060), this protein is NADH-quinone oxidoreductase subunit B.